Here is a 100-residue protein sequence, read N- to C-terminus: ATP synthase subunit c (100 aa).

A run of 2 helical transmembrane segments spans residues 30–50 (LLYL…GVGM) and 80–100 (AFIE…LFVV).

The protein belongs to the ATPase C chain family. As to quaternary structure, F-type ATPases have 2 components, F(1) - the catalytic core - and F(0) - the membrane proton channel. F(1) has five subunits: alpha(3), beta(3), gamma(1), delta(1), epsilon(1). F(0) has three main subunits: a(1), b(2) and c(10-14). The alpha and beta chains form an alternating ring which encloses part of the gamma chain. F(1) is attached to F(0) by a central stalk formed by the gamma and epsilon chains, while a peripheral stalk is formed by the delta and b chains.

It localises to the cell inner membrane. In terms of biological role, f(1)F(0) ATP synthase produces ATP from ADP in the presence of a proton or sodium gradient. F-type ATPases consist of two structural domains, F(1) containing the extramembraneous catalytic core and F(0) containing the membrane proton channel, linked together by a central stalk and a peripheral stalk. During catalysis, ATP synthesis in the catalytic domain of F(1) is coupled via a rotary mechanism of the central stalk subunits to proton translocation. Its function is as follows. Key component of the F(0) channel; it plays a direct role in translocation across the membrane. A homomeric c-ring of between 10-14 subunits forms the central stalk rotor element with the F(1) delta and epsilon subunits. This is ATP synthase subunit c from Aquifex aeolicus (strain VF5).